The following is a 51-amino-acid chain: Large ribosomal subunit protein eL39y (51 aa).

The disordered stretch occupies residues 1-21; sequence MPSHKSFMIKKKLGKKMRQNR. Basic residues predominate over residues 7 to 19; it reads FMIKKKLGKKMRQ.

The protein belongs to the eukaryotic ribosomal protein eL39 family.

This is Large ribosomal subunit protein eL39y (RPL39B) from Arabidopsis thaliana (Mouse-ear cress).